A 485-amino-acid chain; its full sequence is Glutamyl-tRNA(Gln) amidotransferase subunit A (485 aa).

Active-site charge relay system residues include Lys-80 and Ser-155. The active-site Acyl-ester intermediate is Ser-179.

It belongs to the amidase family. GatA subfamily. Heterotrimer of A, B and C subunits.

The enzyme catalyses L-glutamyl-tRNA(Gln) + L-glutamine + ATP + H2O = L-glutaminyl-tRNA(Gln) + L-glutamate + ADP + phosphate + H(+). Its function is as follows. Allows the formation of correctly charged Gln-tRNA(Gln) through the transamidation of misacylated Glu-tRNA(Gln) in organisms which lack glutaminyl-tRNA synthetase. The reaction takes place in the presence of glutamine and ATP through an activated gamma-phospho-Glu-tRNA(Gln). The protein is Glutamyl-tRNA(Gln) amidotransferase subunit A of Endomicrobium trichonymphae.